A 295-amino-acid polypeptide reads, in one-letter code: Pyridoxal 5'-phosphate synthase subunit PdxS (295 aa).

Residue Asp25 participates in D-ribose 5-phosphate binding. Catalysis depends on Lys82, which acts as the Schiff-base intermediate with D-ribose 5-phosphate. Gly154 serves as a coordination point for D-ribose 5-phosphate. Arg166 contacts D-glyceraldehyde 3-phosphate. D-ribose 5-phosphate contacts are provided by residues Gly215 and 236–237; that span reads GS.

Belongs to the PdxS/SNZ family. In terms of assembly, in the presence of PdxT, forms a dodecamer of heterodimers.

The enzyme catalyses aldehydo-D-ribose 5-phosphate + D-glyceraldehyde 3-phosphate + L-glutamine = pyridoxal 5'-phosphate + L-glutamate + phosphate + 3 H2O + H(+). It participates in cofactor biosynthesis; pyridoxal 5'-phosphate biosynthesis. In terms of biological role, catalyzes the formation of pyridoxal 5'-phosphate from ribose 5-phosphate (RBP), glyceraldehyde 3-phosphate (G3P) and ammonia. The ammonia is provided by the PdxT subunit. Can also use ribulose 5-phosphate and dihydroxyacetone phosphate as substrates, resulting from enzyme-catalyzed isomerization of RBP and G3P, respectively. The polypeptide is Pyridoxal 5'-phosphate synthase subunit PdxS (Macrococcus caseolyticus (strain JCSC5402) (Macrococcoides caseolyticum)).